The primary structure comprises 521 residues: Adenosylhomocysteinase-like 1 (521 aa).

Residues 1–92 (MNNLADTVVV…EKVQKNSKGS (92 aa)) form a disordered region. The segment covering 54 to 73 (RSLSASSTDSFSSASYTGSS) has biased composition (low complexity). 2 residues coordinate substrate: D220 and E245. 246–248 (SVT) provides a ligand contact to NAD(+). Residues K275 and D279 each contribute to the substrate site. NAD(+)-binding positions include 311 to 316 (GDVGKG), E332, 388 to 390 (MGH), N435, K515, 515 to 519 (KPNYY), and Y519.

Belongs to the adenosylhomocysteinase family. In terms of assembly, interacts with Ahcy; the interaction may negatively regulate Ahcy catalytic activity. NAD(+) is required as a cofactor.

In terms of biological role, might play a role in the regulation of methionine metabolism possibly by binding and inactivating Ahcy. The sequence is that of Adenosylhomocysteinase-like 1 from Drosophila melanogaster (Fruit fly).